Here is a 473-residue protein sequence, read N- to C-terminus: UDP-glycosyltransferase 71A27 (473 aa).

The active-site Proton acceptor is His-15. An an anthocyanidin-binding site is contributed by His-15. Residue Asp-117 is the Charge relay of the active site. UDP-alpha-D-glucose is bound by residues Ala-345, Gln-347, His-362, Trp-365, Asn-366, Ser-367, and Glu-370. An anthocyanidin is bound at residue Gly-385. Positions 386 and 387 each coordinate UDP-alpha-D-glucose.

It belongs to the UDP-glycosyltransferase family.

It carries out the reaction (20S)-protopanaxadiol + UDP-alpha-D-glucose = (20S)-ginsenoside C-K + UDP + H(+). The protein operates within secondary metabolite biosynthesis; terpenoid biosynthesis. Component of the triterpene saponins (e.g. PPD-type ginsenosides or panaxosides) biosynthetic pathways. Glycosyltransferase that catalyzes the biosynthesis of compound K from protopanaxadiol (PPD). This Panax ginseng (Korean ginseng) protein is UDP-glycosyltransferase 71A27.